The chain runs to 421 residues: Tol-Pal system protein TolB (421 aa).

The first 16 residues, Met1–Ala16, serve as a signal peptide directing secretion.

Belongs to the TolB family. In terms of assembly, the Tol-Pal system is composed of five core proteins: the inner membrane proteins TolA, TolQ and TolR, the periplasmic protein TolB and the outer membrane protein Pal. They form a network linking the inner and outer membranes and the peptidoglycan layer.

It is found in the periplasm. In terms of biological role, part of the Tol-Pal system, which plays a role in outer membrane invagination during cell division and is important for maintaining outer membrane integrity. The sequence is that of Tol-Pal system protein TolB from Wolinella succinogenes (strain ATCC 29543 / DSM 1740 / CCUG 13145 / JCM 31913 / LMG 7466 / NCTC 11488 / FDC 602W) (Vibrio succinogenes).